The sequence spans 69 residues: Rubredoxin-1 (69 aa).

One can recognise a Rubredoxin-like domain in the interval 14-69; the sequence is QASWMCAECGYIYDPAEGNLETNIRPGMPFDKLPDDWSCPVCNHPKNQFTKFISQL. Fe cation-binding residues include Cys-19, Cys-22, Cys-52, and Cys-55.

It belongs to the rubredoxin family. Monomer. Fe(3+) serves as cofactor.

In terms of biological role, serves as an electron acceptor for pyruvate ferredoxin oxidoreductase (PFOR). The protein is Rubredoxin-1 (rub1) of Chlorobaculum tepidum (strain ATCC 49652 / DSM 12025 / NBRC 103806 / TLS) (Chlorobium tepidum).